Reading from the N-terminus, the 347-residue chain is GMP reductase (347 aa).

Position 108 to 131 (108 to 131 (ADFDKMKQILALSPALKFICIDVA)) interacts with NADP(+). The K(+) site is built by G181 and G183. C186 functions as the Thioimidate intermediate in the catalytic mechanism. 216 to 239 (IVSDGGCSVPGDVAKAFGGGADFV) serves as a coordination point for NADP(+).

Belongs to the IMPDH/GMPR family. GuaC type 1 subfamily. In terms of assembly, homotetramer.

The catalysed reaction is IMP + NH4(+) + NADP(+) = GMP + NADPH + 2 H(+). Functionally, catalyzes the irreversible NADPH-dependent deamination of GMP to IMP. It functions in the conversion of nucleobase, nucleoside and nucleotide derivatives of G to A nucleotides, and in maintaining the intracellular balance of A and G nucleotides. The sequence is that of GMP reductase from Yersinia enterocolitica serotype O:8 / biotype 1B (strain NCTC 13174 / 8081).